The primary structure comprises 270 residues: uncharacterized protein (270 aa).

Basic and acidic residues predominate over residues 1–10 (MFGLKVKDAT). Disordered stretches follow at residues 1 to 115 (MFGL…PTPW) and 215 to 236 (QTGF…QGEQ). 2 stretches are compositionally biased toward low complexity: residues 26–41 (SSSS…TQRG) and 98–113 (GTSP…GTPT).

This sequence belongs to the adhesin P1 family.

This is an uncharacterized protein from Mycoplasma pneumoniae (strain ATCC 29342 / M129 / Subtype 1) (Mycoplasmoides pneumoniae).